We begin with the raw amino-acid sequence, 1310 residues long: Major viral transcription factor ICP4 homolog (1310 aa).

Disordered regions lie at residues 117–271 (AGAR…GPVE), 285–454 (GAKA…TPII), and 636–697 (GSSP…LLDK). The span at 341 to 350 (PVEKKPKSRE) shows a compositional bias: basic and acidic residues. Composition is skewed to low complexity over residues 351–364 (FVSS…WGSS), 392–407 (PSPS…DGGS), and 648–666 (PSPT…SAAA). The short motif at 677–685 (RLRTPRKRK) is the Nuclear localization signal element. Residues serine 686 and serine 722 each carry the phosphoserine; by viral VZV ORF66 modification. 2 disordered regions span residues 1193 to 1258 (GTRF…SFGV) and 1282 to 1310 (ELLS…QSRG). Residues 1217–1227 (RTADDREHALE) are compositionally biased toward basic and acidic residues. A compositionally biased stretch (acidic residues) spans 1228–1250 (LDDWEVGCEDAWDSEEGGGDDGD).

It belongs to the herpesviridae ICP4 family. As to quaternary structure, interacts with IE4 and IE63. Interacts with host USF1 and SP1. Phosphorylated by ORF66 protein kinase on Ser-686 and Ser-722. Also phosphorylated by ORF47 protein kinase and by human CSNK2A1/CKII.

It is found in the host nucleus. The protein resides in the host cytoplasm. Its subcellular location is the virion tegument. In terms of biological role, transcriptional transactivator. May interact with and recruit specific components of the general transcription machinery to viral promoters and stabilize their formation for transcription initiation. Negatively regulates its own transcription. This immediate early (EI) protein may be necessary in virion for viral pathogenesis. The protein is Major viral transcription factor ICP4 homolog of Homo sapiens (Human).